The chain runs to 85 residues: Large ribosomal subunit protein bL27 (85 aa).

Positions 1-24 are disordered; the sequence is MAHKKAGGSSRNGRDSNSKRLGVK.

This sequence belongs to the bacterial ribosomal protein bL27 family.

This chain is Large ribosomal subunit protein bL27, found in Nitrosospira multiformis (strain ATCC 25196 / NCIMB 11849 / C 71).